Reading from the N-terminus, the 248-residue chain is UPF0246 protein FN1762 (248 aa).

This sequence belongs to the UPF0246 family.

This is UPF0246 protein FN1762 from Fusobacterium nucleatum subsp. nucleatum (strain ATCC 25586 / DSM 15643 / BCRC 10681 / CIP 101130 / JCM 8532 / KCTC 2640 / LMG 13131 / VPI 4355).